Consider the following 770-residue polypeptide: MSRKGPRAEVCADCSAPDPGWASISRGVLVCDECCSVHRSLGRHISIVKHLRHSAWPPTLLQMVHTLASNGANSIWEHSLLDPAQVQSGRRKANPQDKVHPIKSEFIRAKYQMLAFVHKLPCRDDDGVTAKDLSKQLHSSVRTGNLETCLRLLSLGAQANFFHPEKGTTPLHVAAKAGQTLQAELLVVYGADPGSPDVNGRTPIDYARQAGHHELAERLVECQYELTDRLAFYLCGRKPDHKNGHYIIPQMADRSRQKCMSQSLDLSELAKAAKKKLQALSNRLFEELAMDVYDEVDRRENDAVWLATQNHSTLVTERSAVPFLPVNPEYSATRNQGRQKLARFNAREFATLIIDILSEAKRRQQGKSLSSPTDNLELSARSQSELDDQHDYDSVASDEDTDQEPLPSAGATRNNRARSMDSSDLSDGAVTLQEYLELKKALATSEAKVQQLMKVNSSLSDELRRLQREIHKLQAENLQLRQPPGPVPPPSLPSERAEHTLMGPGGSTHRRDRQAFSMYEPGSALKPFGGTPGDELATRLQPFHSTELEDDAIYSVHVPAGLYRIRKGVSASSVPFTPSSPLLSCSQEGSRHASKLSRHGSGADSDYENTQSGDPLLGLEGKRFLELSKEDELHPELESLDGDLDPGLPSTEDVILKTEQVTKNIQELLRAAQEFKHDSFVPCSEKIHLAVTEMASLFPKRPALEPVRSSLRLLNASAYRLQSECRKTVPPEPGAPVDFQLLTQQVIQCAYDIAKAAKQLVTITTREKKQ.

The 124-residue stretch at 1–124 folds into the Arf-GAP domain; sequence MSRKGPRAEV…AFVHKLPCRD (124 aa). The interval 1–124 is interaction with gamma-tubulin and localization to the centrosome; that stretch reads MSRKGPRAEV…AFVHKLPCRD (124 aa). The C4-type zinc-finger motif lies at 11 to 34; the sequence is CADCSAPDPGWASISRGVLVCDEC. ANK repeat units lie at residues 132 to 161, 166 to 195, and 199 to 228; these read DLSK…QANF, KGTT…DPGS, and NGRT…ELTD. Residue Tyr-224 is modified to Phosphotyrosine. Residues 245–374 form an interaction with PCLO region; sequence HYIIPQMADR…QGKSLSSPTD (130 aa). Residues 253–424 are interaction with PTK2/FAK1; sequence DRSRQKCMSQ…NRARSMDSSD (172 aa). The interaction with ARHGEF7 stretch occupies residues 254-376; that stretch reads RSRQKCMSQS…KSLSSPTDNL (123 aa). Positions 363-425 are disordered; sequence RQQGKSLSSP…RARSMDSSDL (63 aa). Over residues 366–383 the composition is skewed to polar residues; the sequence is GKSLSSPTDNLELSARSQ. Ser-368 and Ser-371 each carry phosphoserine. Thr-373 is modified (phosphothreonine). The tract at residues 375–596 is interaction with NCK2 and GRIN3A; the sequence is NLELSARSQS…QEGSRHASKL (222 aa). The segment at 375–596 is required for localization at synapses; the sequence is NLELSARSQS…QEGSRHASKL (222 aa). Ser-379 and Ser-384 each carry phosphoserine. Tyr-392 bears the Phosphotyrosine mark. Phosphoserine occurs at positions 394 and 397. Over residues 394-403 the composition is skewed to acidic residues; sequence SVASDEDTDQ. Thr-401 carries the phosphothreonine modification. Ser-419, Ser-422, and Ser-426 each carry phosphoserine. Positions 420 to 475 are interaction with MAPK1; the sequence is MDSSDLSDGAVTLQEYLELKKALATSEAKVQQLMKVNSSLSDELRRLQREIHKLQA. The segment at 429–629 is interaction with IKBKG; it reads AVTLQEYLEL…EGKRFLELSK (201 aa). A coiled-coil region spans residues 449 to 483; the sequence is VQQLMKVNSSLSDELRRLQREIHKLQAENLQLRQP. A phosphoserine mark is found at Ser-507 and Ser-545. At Thr-546 the chain carries Phosphothreonine. Phosphotyrosine occurs at positions 554 and 563. Phosphoserine is present on residues Ser-570, Ser-580, Ser-601, and Ser-605. Over residues 578–588 the composition is skewed to polar residues; it reads PSSPLLSCSQE. The disordered stretch occupies residues 578–615; it reads PSSPLLSCSQEGSRHASKLSRHGSGADSDYENTQSGDP. Thr-610 is modified (phosphothreonine). At Ser-639 the chain carries Phosphoserine. The interaction with PXN and TGFB1I1 stretch occupies residues 646-770; the sequence is PGLPSTEDVI…VTITTREKKQ (125 aa).

In terms of assembly, forms homodimers and possibly oligomers. May forms heterooligomers with GIT2. Interacts with G protein-coupled receptor kinases, including GRK2, GRK3, GRK5 and GRK6. Interacts with PPFIA1, PPFIA2 and PPFIA4. Interacts with GRIP1 and forms a ternary complex with PPFIA1 and GRIP1. Directly interacts with ARHGEF7/beta-PIX, forming in vitro a heptameric complex made of a GIT1 dimer and an ARHGEF7 trimer. Directly interacts with PXN/paxillin; this interaction is enhanced in the presence of ARHGEF7. Directly interacts (via C-terminus) with TGFB1I1/Hic-5 (via LD motif 3). Directly interacts with PTK2/FAK1. May interact with PTK2B/PYK2; this interaction may be indirect. Interacts with AMPA receptors GRIA2/3. Directly interacts with protein Piccolo/PCLO. Forms a complex with Ephrin-B1/EFNB1 and NCK2/GRB4 (via SH2); this interaction is important for spine morphogenesis and synapse formation. Interaction with NCK2 is transient and depends upon GIT1 phosphorylation at Tyr-392. Interacts with GRIN3A/GluN3A (via C-terminus); this interaction competes with GIT1 interaction with ARHGEF7 and limits synaptic localization of GIT1. Interacts with IKBKG/NEMO in resting bone mesenchymal stem cells, as well as in TNF-stimulated cells; this interaction may increase IKBKG affinity for 'Lys-63'-linked polyubiquitin chains. Interacts with GABA(A) receptors, including GABRB3 and GABRG2. Interacts with SCRIB. Interacts (via N- and C-terminus) with ENTR1/SDCCAG3 (via N-terminus); this interaction is direct. May form a tripartite complex with ENTR1 and PTPN13. Interacts with YWHAZ. Interacts with PAK1. Interacts with PAK3. Directly interacts (via N-terminus) with gamma-tubulin. Interacts with MAPK1 and MAPK3; this interaction is required for MAPK1/3 recruitment to focal adhesions. Post-translationally, phosphorylated on tyrosine residues by PTK2/FAK1 and SRC in growing fibroblasts. Phosphorylation at Tyr-392 is induced by activation of Ephrin-B1/EFNB1 and catalyzed by SRC family kinases. It is required for the interaction with NCK2 and for GIT1 recruitment to synapses in hippocampal neurons. Expressed in the brain (at protein level). Also expressed at high levels in lung and heart. In lung, expressed in endothelial cells, especially in capillaries; also expressed in smooth muscle and epithelial cells of bronchi (at protein level). Expressed in bone marrow mesenchymal stem cells, as well as in osteoclasts and bone marrow-derived macrophages (at protein level).

Its subcellular location is the cytoplasm. The protein resides in the presynapse. The protein localises to the postsynapse. It localises to the postsynaptic density. It is found in the cell junction. Its subcellular location is the focal adhesion. The protein resides in the cell projection. The protein localises to the lamellipodium. It localises to the cytoskeleton. It is found in the microtubule organizing center. Its subcellular location is the centrosome. The protein resides in the spindle pole. Its function is as follows. GTPase-activating protein for ADP ribosylation factor family members, including ARF1. Multidomain scaffold protein that interacts with numerous proteins and therefore participates in many cellular functions, including receptor internalization, focal adhesion remodeling, and signaling by both G protein-coupled receptors and tyrosine kinase receptors. Through PAK1 activation, positively regulates microtubule nucleation during interphase. Plays a role in the regulation of cytokinesis; for this function, may act in a pathway also involving ENTR1 and PTPN13. May promote cell motility both by regulating focal complex dynamics and by the activation of RAC1. May act as scaffold for MAPK1/3 signal transduction, recruiting MAPK1/3 to focal adhesions after EGF stimulation via a Src-dependent pathway, hence stimulating cell migration. Plays a role in brain development and function. Involved in the regulation of spine density and synaptic plasticity that is required for processes involved in learning. Plays an important role in dendritic spine morphogenesis and synapse formation. In hippocampal neurons, recruits guanine nucleotide exchange factors (GEFs), such as ARHGEF7/beta-PIX, to the synaptic membrane. These in turn locally activate RAC1, which is an essential step for spine morphogenesis and synapse formation. May contribute to the organization of presynaptic active zones through oligomerization and formation of a Piccolo/PCLO-based protein network, which includes ARHGEF7/beta-PIX and FAK1. In neurons, through its interaction with liprin-alpha family members, may be required for AMPA receptor (GRIA2/3) proper targeting to the cell membrane. In complex with GABA(A) receptors and ARHGEF7, plays a crucial role in regulating GABA(A) receptor synaptic stability, maintaining GPHN/gephyrin scaffolds and hence GABAergic inhibitory synaptic transmission, by locally coordinating RAC1 and PAK1 downstream effector activity, leading to F-actin stabilization. May also be important for RAC1 downstream signaling pathway through PAK3 and regulation of neuronal inhibitory transmission at presynaptic input. Required for successful bone regeneration during fracture healing. The function in intramembranous ossification may, at least partly, exerted by macrophages in which GIT1 is a key negative regulator of redox homeostasis, IL1B production, and glycolysis, acting through the ERK1/2/NRF2/NFE2L2 axis. May play a role in angiogenesis during fracture healing. In this process, may regulate activation of the canonical NF-kappa-B signal in bone mesenchymal stem cells by enhancing the interaction between NEMO and 'Lys-63'-ubiquitinated RIPK1/RIP1, eventually leading to enhanced production of VEGFA and others angiogenic factors. Essential for VEGF signaling through the activation of phospholipase C-gamma and ERK1/2, hence may control endothelial cell proliferation and angiogenesis. The protein is ARF GTPase-activating protein GIT1 (Git1) of Mus musculus (Mouse).